Consider the following 228-residue polypeptide: Ribonuclease S-1 (228 aa).

The first 27 residues, Met-1–Gly-27, serve as a signal peptide directing secretion. An RNA-binding site is contributed by Gln-36. A disulfide bridge connects residues Cys-42 and Cys-49. Residue His-60 participates in RNA binding. His-60 (proton donor) is an active-site residue. A disulfide bond links Cys-75 and Cys-119. The N-linked (GlcNAc...) asparagine glycan is linked to Asn-87. Asn-98–Val-99 is a binding site for RNA. Asn-101 is a glycosylation site (N-linked (GlcNAc...) asparagine). RNA contacts are provided by residues Phe-108, Lys-111–Glu-112, and Lys-115–His-116. Glu-112 is an active-site residue. Residue His-116 is the Proton acceptor of the active site. 3 N-linked (GlcNAc...) asparagine glycosylation sites follow: Asn-144, Asn-157, and Asn-175. Intrachain disulfides connect Cys-183–Cys-222 and Cys-199–Cys-210.

The protein belongs to the RNase T2 family. Post-translationally, N-linked core structure at Asn-87 and Asn-101 contains xylose and fucose or consists of disaccharide (GlcNAc-GlcNAc). N-linked core structure at Asn-144 contains xylose.

It carries out the reaction a ribonucleotidyl-ribonucleotide-RNA + H2O = a 3'-end 3'-phospho-ribonucleotide-RNA + a 5'-end dephospho-ribonucleoside-RNA + H(+). Self-incompatibility (SI) is the inherited ability of a flowering plant to prevent self-fertilization by discriminating between self and non-self pollen during pollination. In many species, self-incompatibility is controlled by the single, multiallelic locus S. The sequence is that of Ribonuclease S-1 from Pyrus pyrifolia (Chinese pear).